A 365-amino-acid chain; its full sequence is 5-hydroxytryptamine receptor 1E (365 aa).

Over 1–22 (MNITNCTTDASMVVRPKTVTEK) the chain is Extracellular. Residues Asn2 and Asn5 are each glycosylated (N-linked (GlcNAc...) asparagine). A helical membrane pass occupies residues 23 to 47 (MLICMTLVIITTLTMLLNSAVIMAI). Residues 48 to 59 (CTTKKLHQPANY) are Cytoplasmic-facing. Residues 60-82 (LICSLAVTDLLVAVLVMPLSIMY) traverse the membrane as a helical segment. The Extracellular segment spans residues 83–96 (IVMDSWRLGYFICE). Cysteines 95 and 173 form a disulfide. Residues 97 to 118 (VWLSVDMTCCTCSILHLCVIAL) traverse the membrane as a helical segment. Ergotamine-binding residues include Asp102 and Thr107. The DRY motif; important for ligand-induced conformation changes motif lies at 119-121 (DRY). At 119 to 138 (DRYWAITNAIEYARKRTAKR) the chain is on the cytoplasmic side. The chain crosses the membrane as a helical span at residues 139-160 (AGLMILTVWTISIFISMPPLFW). Over 161–179 (RSHRQLSPPPSQCTIQHDH) the chain is Extracellular. Position 175 (Ile175) interacts with ergotamine. Residues 180–202 (VIYTIYSTFGAFYIPLTLILILY) form a helical membrane-spanning segment. At 203–291 (YRIYHAAKSL…SSTRERKAAR (89 aa)) the chain is on the cytoplasmic side. The helical transmembrane segment at 292 to 314 (ILGLILGAFILSWLPFFIKELIV) threads the bilayer. Residues 315–324 (GLSIYTVSSE) are Extracellular-facing. The helical transmembrane segment at 325 to 347 (VGDFLTWLGYVNSLINPLLYTSF) threads the bilayer. An NPxxY motif; important for ligand-induced conformation changes and signaling motif is present at residues 340-344 (NPLLY). The Cytoplasmic portion of the chain corresponds to 348–365 (NEDFKLAFKKLIRCREHT).

This sequence belongs to the G-protein coupled receptor 1 family. As to expression, detected in the brain with the greatest abundance in the hippocampus, followed by the olfactory bulb. Lower levels are detected in the cortex, thalamus, pons, hypothalamus, midbrain, striatum, and cerebellum.

The protein localises to the cell membrane. In terms of biological role, G-protein coupled receptor for 5-hydroxytryptamine (serotonin). Also functions as a receptor for various alkaloids and psychoactive substances. Ligand binding causes a conformation change that triggers signaling via guanine nucleotide-binding proteins (G proteins) and modulates the activity of down-stream effectors, such as adenylate cyclase. Signaling inhibits adenylate cyclase activity. This is 5-hydroxytryptamine receptor 1E (5HT1E) from Cavia porcellus (Guinea pig).